The following is a 277-amino-acid chain: Probable endonuclease 4 (277 aa).

Positions 67, 107, 142, 176, 179, 211, 224, 226, and 256 each coordinate Zn(2+).

The protein belongs to the AP endonuclease 2 family. Zn(2+) serves as cofactor.

The enzyme catalyses Endonucleolytic cleavage to 5'-phosphooligonucleotide end-products.. Its function is as follows. Endonuclease IV plays a role in DNA repair. It cleaves phosphodiester bonds at apurinic or apyrimidinic (AP) sites, generating a 3'-hydroxyl group and a 5'-terminal sugar phosphate. The sequence is that of Probable endonuclease 4 from Clostridium beijerinckii (strain ATCC 51743 / NCIMB 8052) (Clostridium acetobutylicum).